A 259-amino-acid chain; its full sequence is 3-deoxy-manno-octulosonate cytidylyltransferase (259 aa).

This sequence belongs to the KdsB family.

The protein localises to the cytoplasm. It carries out the reaction 3-deoxy-alpha-D-manno-oct-2-ulosonate + CTP = CMP-3-deoxy-beta-D-manno-octulosonate + diphosphate. It functions in the pathway nucleotide-sugar biosynthesis; CMP-3-deoxy-D-manno-octulosonate biosynthesis; CMP-3-deoxy-D-manno-octulosonate from 3-deoxy-D-manno-octulosonate and CTP: step 1/1. It participates in bacterial outer membrane biogenesis; lipopolysaccharide biosynthesis. Functionally, activates KDO (a required 8-carbon sugar) for incorporation into bacterial lipopolysaccharide in Gram-negative bacteria. The sequence is that of 3-deoxy-manno-octulosonate cytidylyltransferase from Xanthomonas euvesicatoria pv. vesicatoria (strain 85-10) (Xanthomonas campestris pv. vesicatoria).